A 426-amino-acid polypeptide reads, in one-letter code: D-cysteine desulfhydrase 1, mitochondrial (426 aa).

The transit peptide at 1–63 (MARGAHQAPG…IGSFLSKRPY (63 aa)) directs the protein to the mitochondrion. Residue lysine 119 is modified to N6-(pyridoxal phosphate)lysine. Serine 146 acts as the Nucleophile in catalysis.

The protein belongs to the ACC deaminase/D-cysteine desulfhydrase family. As to quaternary structure, homodimer. Pyridoxal 5'-phosphate serves as cofactor. Present in seeds (at protein level).

It is found in the mitochondrion. It carries out the reaction D-cysteine + H2O = hydrogen sulfide + pyruvate + NH4(+) + H(+). With respect to regulation, inhibited by L-cysteine (L-cys). Catalyzes the production of hydrogen sulfide (H2S) from D-cysteine (D-cys). This chain is D-cysteine desulfhydrase 1, mitochondrial, found in Oryza sativa subsp. japonica (Rice).